The primary structure comprises 186 residues: Ribosome-recycling factor (186 aa).

Belongs to the RRF family.

Its subcellular location is the cytoplasm. Functionally, responsible for the release of ribosomes from messenger RNA at the termination of protein biosynthesis. May increase the efficiency of translation by recycling ribosomes from one round of translation to another. This Rickettsia massiliae (strain Mtu5) protein is Ribosome-recycling factor.